A 287-amino-acid chain; its full sequence is Inorganic pyrophosphatase (287 aa).

Arg-79 lines the diphosphate pocket. The Mg(2+) site is built by Asp-116, Asp-121, and Asp-153.

The protein belongs to the PPase family. Mg(2+) is required as a cofactor.

The protein resides in the cytoplasm. The enzyme catalyses diphosphate + H2O = 2 phosphate + H(+). The chain is Inorganic pyrophosphatase (IPP1) from Eremothecium gossypii (strain ATCC 10895 / CBS 109.51 / FGSC 9923 / NRRL Y-1056) (Yeast).